Reading from the N-terminus, the 710-residue chain is Prolyl endopeptidase (710 aa).

Met1 is subject to N-acetylmethionine. An N6-acetyllysine modification is found at Lys157. Residues Ser554, Asp641, and His680 each act as charge relay system in the active site.

This sequence belongs to the peptidase S9A family. Expressed in all tissues tested: uterus, kidney, heart, lung, small intestine, smooth muscle, liver, spleen, thymus, adrenal, pituitary and whole brain.

It localises to the cytoplasm. The enzyme catalyses Hydrolysis of Pro-|-Xaa &gt;&gt; Ala-|-Xaa in oligopeptides.. Inhibited by DFP, Z-Pro-prolinal and poststatin, but not by PMSF, SBTI, EDTA, leupeptin, E-64 and pepstatin. In terms of biological role, cleaves peptide bonds on the C-terminal side of prolyl residues within peptides that are up to approximately 30 amino acids long. Has high activity on the succinyl- (suc-) peptide-4-methylcoumaryl-7-amide (MCA) substrates suc-Gly-Pro-Leu-Gly-Pro-MCA, suc-Gly-Pro-MCA and suc-Ala-Ala-Ala-MCA. The polypeptide is Prolyl endopeptidase (Rattus norvegicus (Rat)).